The primary structure comprises 370 residues: Probable endopolygalacturonase A (370 aa).

The N-terminal stretch at 1 to 19 (MPSAKPLFCLATLAGAALA) is a signal peptide. The propeptide occupies 20 to 32 (APAPSRVSDFTKR). Cysteine 35 and cysteine 50 are disulfide-bonded. PbH1 repeat units follow at residues 162-192 (SDNL…DISE), 193-214 (STYI…AINS), 215-235 (GENI…SIGS), 244-265 (VKNV…RIKT), 273-295 (VEDI…VIEQ), and 307-352 (SNGV…DITG). Aspartate 207 serves as the catalytic Proton donor. Residues cysteine 209 and cysteine 225 are joined by a disulfide bond. Residue histidine 229 is part of the active site. N-linked (GlcNAc...) asparagine glycosylation occurs at asparagine 246. Cystine bridges form between cysteine 335/cysteine 340 and cysteine 359/cysteine 368.

Belongs to the glycosyl hydrolase 28 family.

The protein localises to the secreted. The enzyme catalyses (1,4-alpha-D-galacturonosyl)n+m + H2O = (1,4-alpha-D-galacturonosyl)n + (1,4-alpha-D-galacturonosyl)m.. Its function is as follows. Involved in maceration and soft-rotting of plant tissue. Hydrolyzes the 1,4-alpha glycosidic bonds of de-esterified pectate in the smooth region of the plant cell wall. This is Probable endopolygalacturonase A (pgaA) from Aspergillus niger (strain ATCC MYA-4892 / CBS 513.88 / FGSC A1513).